The chain runs to 393 residues: Protein TsgA (393 aa).

Helical transmembrane passes span 11–31 (WISF…GMVM), 51–71 (FLNA…EIVP), 78–98 (FGFI…SLAL), 101–121 (AAMF…TFLI), 134–154 (LLFT…VAAF), 162–182 (WYWV…LTFG), 206–226 (IGVL…LGFI), 245–265 (ALVS…SFIL), 273–293 (ILTV…TGTQ), 298–318 (WFIL…ITLG), 332–352 (FILT…GPIV), and 361–381 (LLTA…LGFV).

It belongs to the major facilitator superfamily. TsgA family.

The protein resides in the cell inner membrane. This is Protein TsgA from Salmonella gallinarum (strain 287/91 / NCTC 13346).